Reading from the N-terminus, the 233-residue chain is Small ribosomal subunit protein uS3 (233 aa).

The region spanning V39–R107 is the KH type-2 domain.

This sequence belongs to the universal ribosomal protein uS3 family. In terms of assembly, part of the 30S ribosomal subunit. Forms a tight complex with proteins S10 and S14.

In terms of biological role, binds the lower part of the 30S subunit head. Binds mRNA in the 70S ribosome, positioning it for translation. This chain is Small ribosomal subunit protein uS3, found in Pectobacterium carotovorum subsp. carotovorum (strain PC1).